The primary structure comprises 350 residues: Small ribosomal subunit biogenesis GTPase RsgA (350 aa).

Polar residues predominate over residues 1-17 (MSKNKLSKGQQRRVNAN). The interval 1–24 (MSKNKLSKGQQRRVNANHQRRLKT) is disordered. One can recognise a CP-type G domain in the interval 104-273 (TSVLTRPDFY…VIDSPGVREF (170 aa)). GTP-binding positions include 160-163 (NKID) and 214-222 (GQSGVGKSS). Zn(2+) is bound by residues C297, C302, H304, and C310.

Belongs to the TRAFAC class YlqF/YawG GTPase family. RsgA subfamily. Monomer. Associates with 30S ribosomal subunit, binds 16S rRNA. The cofactor is Zn(2+).

It is found in the cytoplasm. Its function is as follows. One of several proteins that assist in the late maturation steps of the functional core of the 30S ribosomal subunit. Helps release RbfA from mature subunits. May play a role in the assembly of ribosomal proteins into the subunit. Circularly permuted GTPase that catalyzes slow GTP hydrolysis, GTPase activity is stimulated by the 30S ribosomal subunit. This chain is Small ribosomal subunit biogenesis GTPase RsgA, found in Salmonella schwarzengrund (strain CVM19633).